A 433-amino-acid polypeptide reads, in one-letter code: D-amino acid dehydrogenase (433 aa).

3-17 (VLVLGSGVIGTASAY) contacts FAD.

The protein belongs to the DadA oxidoreductase family. The cofactor is FAD.

It catalyses the reaction a D-alpha-amino acid + A + H2O = a 2-oxocarboxylate + AH2 + NH4(+). It participates in amino-acid degradation; D-alanine degradation; NH(3) and pyruvate from D-alanine: step 1/1. In terms of biological role, oxidative deamination of D-amino acids. The chain is D-amino acid dehydrogenase from Pseudomonas putida (strain W619).